A 63-amino-acid chain; its full sequence is Large ribosomal subunit protein eL37 (63 aa).

Positions 20, 23, 35, and 38 each coordinate Zn(2+). The segment at 20–38 (CRRCGRRAFNVKKGYCAAC) adopts a C4-type zinc-finger fold.

The protein belongs to the eukaryotic ribosomal protein eL37 family. The cofactor is Zn(2+).

Its function is as follows. Binds to the 23S rRNA. The polypeptide is Large ribosomal subunit protein eL37 (Thermococcus gammatolerans (strain DSM 15229 / JCM 11827 / EJ3)).